Reading from the N-terminus, the 429-residue chain is Bifunctional phosphoribosylaminoimidazole carboxylase/phosphoribosylaminoimidazole succinocarboxamide synthetase (429 aa).

An SAICAR synthetase region spans residues 7 to 264 (ASIEGYKLGK…WVAEQLADIV (258 aa)). Residues 7-264 (ASIEGYKLGK…WVAEQLADIV (258 aa)) are SAICAR synthetase domain. An AIR carboxylase region spans residues 265-429 (PKKDHLVVIL…DKELRGVRNA (165 aa)). The interval 270–429 (LVVILMGSAS…DKELRGVRNA (160 aa)) is AIR carboxylase domain. Ser-335 is a binding site for CO2.

It in the N-terminal section; belongs to the SAICAR synthetase family. In the C-terminal section; belongs to the AIR carboxylase family. Class II subfamily. In terms of assembly, homooctamer.

It catalyses the reaction 5-amino-1-(5-phospho-D-ribosyl)imidazole-4-carboxylate + L-aspartate + ATP = (2S)-2-[5-amino-1-(5-phospho-beta-D-ribosyl)imidazole-4-carboxamido]succinate + ADP + phosphate + 2 H(+). The catalysed reaction is 5-amino-1-(5-phospho-D-ribosyl)imidazole-4-carboxylate + H(+) = 5-amino-1-(5-phospho-beta-D-ribosyl)imidazole + CO2. The protein operates within purine metabolism; IMP biosynthesis via de novo pathway; 5-amino-1-(5-phospho-D-ribosyl)imidazole-4-carboxamide from 5-amino-1-(5-phospho-D-ribosyl)imidazole-4-carboxylate: step 1/2. It functions in the pathway purine metabolism; IMP biosynthesis via de novo pathway; 5-amino-1-(5-phospho-D-ribosyl)imidazole-4-carboxylate from 5-amino-1-(5-phospho-D-ribosyl)imidazole (carboxylase route): step 1/1. Bifunctional phosphoribosylaminoimidazole carboxylase and phosphoribosylaminoimidazole succinocarboxamide synthetase catalyzing two reactions of the de novo purine biosynthetic pathway. This is Bifunctional phosphoribosylaminoimidazole carboxylase/phosphoribosylaminoimidazole succinocarboxamide synthetase from Drosophila melanogaster (Fruit fly).